The primary structure comprises 161 residues: Putative acetyltransferase SAR0816 (161 aa).

It belongs to the transferase hexapeptide repeat family.

In Staphylococcus aureus (strain MRSA252), this protein is Putative acetyltransferase SAR0816.